The primary structure comprises 390 residues: 23S rRNA (uracil(747)-C(5))-methyltransferase RlmC (390 aa).

[4Fe-4S] cluster contacts are provided by Cys-12, Cys-20, Cys-23, and Cys-100. 4 residues coordinate S-adenosyl-L-methionine: Gln-225, Phe-254, Glu-275, and Asn-322. Cys-349 functions as the Nucleophile in the catalytic mechanism.

This sequence belongs to the class I-like SAM-binding methyltransferase superfamily. RNA M5U methyltransferase family. RlmC subfamily.

It carries out the reaction uridine(747) in 23S rRNA + S-adenosyl-L-methionine = 5-methyluridine(747) in 23S rRNA + S-adenosyl-L-homocysteine + H(+). Catalyzes the formation of 5-methyl-uridine at position 747 (m5U747) in 23S rRNA. This Shewanella baltica (strain OS155 / ATCC BAA-1091) protein is 23S rRNA (uracil(747)-C(5))-methyltransferase RlmC.